The primary structure comprises 258 residues: Shikimate dehydrogenase (NADP(+)) (258 aa).

Residues 14 to 16 and Thr-61 each bind shikimate; that span reads SES. Lys-65 acts as the Proton acceptor in catalysis. Residues Asn-86 and Asp-101 each coordinate shikimate. NADP(+) contacts are provided by residues 125 to 129 and Leu-211; that span reads GSGGS. Position 213 (Tyr-213) interacts with shikimate. An NADP(+)-binding site is contributed by Gly-234.

This sequence belongs to the shikimate dehydrogenase family. In terms of assembly, homodimer.

The enzyme catalyses shikimate + NADP(+) = 3-dehydroshikimate + NADPH + H(+). The protein operates within metabolic intermediate biosynthesis; chorismate biosynthesis; chorismate from D-erythrose 4-phosphate and phosphoenolpyruvate: step 4/7. In terms of biological role, involved in the biosynthesis of the chorismate, which leads to the biosynthesis of aromatic amino acids. Catalyzes the reversible NADPH linked reduction of 3-dehydroshikimate (DHSA) to yield shikimate (SA). In Clostridium botulinum (strain ATCC 19397 / Type A), this protein is Shikimate dehydrogenase (NADP(+)).